The chain runs to 83 residues: Keratin-associated protein 6-1 (83 aa).

Residues 9–15 (YGGLGCG) form an RPT 1-1 repeat. One copy of the RPT 1-2 repeat lies at 19–25 (YGGLGCG). One copy of the RPT 2-1 repeat lies at 44–55 (GYGYGSRSLCGS). An RPT 2-2 repeat occupies 56-67 (GYGYGSRSLCGS).

The protein belongs to the KRTAP type 6 family. As to quaternary structure, interacts with wool keratins.

In the wool cortex, wool keratin intermediate filaments are embedded in an interfilamentous matrix, consisting of hair keratin-associated proteins (KRTAP), which are essential for the formation of a rigid and resistant wool shaft through their extensive disulfide bond cross-linking with abundant cysteine residues of wool keratins. The matrix proteins include the high-sulfur and high-glycine-tyrosine keratins. The sequence is that of Keratin-associated protein 6-1 (KRTAP6-1) from Ovis aries (Sheep).